The primary structure comprises 155 residues: Ribosomal RNA large subunit methyltransferase H (155 aa).

Residues L72, G103, and 122 to 127 each bind S-adenosyl-L-methionine; that span reads LSTMTL.

It belongs to the RNA methyltransferase RlmH family. Homodimer.

Its subcellular location is the cytoplasm. It carries out the reaction pseudouridine(1915) in 23S rRNA + S-adenosyl-L-methionine = N(3)-methylpseudouridine(1915) in 23S rRNA + S-adenosyl-L-homocysteine + H(+). Specifically methylates the pseudouridine at position 1915 (m3Psi1915) in 23S rRNA. This is Ribosomal RNA large subunit methyltransferase H from Nitrosomonas eutropha (strain DSM 101675 / C91 / Nm57).